Here is a 511-residue protein sequence, read N- to C-terminus: MANTKHIIIVGAGPGGLCAGMLLSQRGFKVSIFDKHAEIGGRNRPINMNGFTFDTGPTFLLMKGVLDEMFELCERRSEDYLEFLPLSPMYRLLYDDRDIFVYSDRENMRAELQRVFDEGTDGYEQFMEQERKRFNALYPCITRDYSSLKSFLSLDLIKALPWLAFPKSVFNNLGQYFNQEKMRLAFCFQSKYLGMSPWECPALFTMLPYLEHEYGIYHVKGGLNRIAAAMAQVIAENGGEIHLNSEIESLIIENGAAKGVKLQHGAELRGDEVIINADFAHAMTHLVKPGVLKKYTPENLKQREYSCSTFMLYLGLDKIYDLPHHTIVFAKDYTTNIRNIFDNKTLTDDFSFYVQNASASDDSLAPAGKSALYVLVPMPNNDSGLDWQAHCQNVREQVLDTLGARLGLSDIRAHIECEKIITPQTWETDEHVYKGATFSLSHKFSQMLYWRPHNRFEELANCYLVGGGTHPGSGLPTIYESARISAKLISQKHRVRFKDIAHSAWLKKAKA.

It belongs to the carotenoid/retinoid oxidoreductase family.

It catalyses the reaction 15-cis-4,4'-diapophytoene + 4 FAD + 4 H(+) = all-trans-4,4'-diapolycopene + 4 FADH2. The protein operates within carotenoid biosynthesis. Its function is as follows. Involved in the biosynthesis of C30 carotenoids. Catalyzes four successive dehydrogenation reactions that lead to the introduction of four double bonds into 4,4'-diapophytoene (dehydrosqualene) to yield 4,4'-diapolycopene. This is 4,4'-diapophytoene desaturase (4,4'-diapolycopene-forming) from Methylomonas sp.